The chain runs to 208 residues: Dephospho-CoA kinase (208 aa).

Residues 11-207 enclose the DPCK domain; the sequence is VIGLTGGIAS…EYYLELAQHD (197 aa). Residue 19–24 coordinates ATP; that stretch reads ASGKSA.

Belongs to the CoaE family.

It localises to the cytoplasm. It carries out the reaction 3'-dephospho-CoA + ATP = ADP + CoA + H(+). It functions in the pathway cofactor biosynthesis; coenzyme A biosynthesis; CoA from (R)-pantothenate: step 5/5. Functionally, catalyzes the phosphorylation of the 3'-hydroxyl group of dephosphocoenzyme A to form coenzyme A. The protein is Dephospho-CoA kinase of Hahella chejuensis (strain KCTC 2396).